A 542-amino-acid chain; its full sequence is ATP synthase subunit beta (542 aa).

A compositionally biased stretch (low complexity) spans 1–50 (MAKTPAKAPAAAAKPAAVKKPAAPKAAAAPKAAAVATPAAKKPAAPKAAP). The segment at 1-61 (MAKTPAKAPA…SKVAGTREKP (61 aa)) is disordered. 216–223 (GGAGVGKT) is an ATP binding site.

This sequence belongs to the ATPase alpha/beta chains family. As to quaternary structure, F-type ATPases have 2 components, CF(1) - the catalytic core - and CF(0) - the membrane proton channel. CF(1) has five subunits: alpha(3), beta(3), gamma(1), delta(1), epsilon(1). CF(0) has three main subunits: a(1), b(2) and c(9-12). The alpha and beta chains form an alternating ring which encloses part of the gamma chain. CF(1) is attached to CF(0) by a central stalk formed by the gamma and epsilon chains, while a peripheral stalk is formed by the delta and b chains.

The protein resides in the cell inner membrane. It catalyses the reaction ATP + H2O + 4 H(+)(in) = ADP + phosphate + 5 H(+)(out). In terms of biological role, produces ATP from ADP in the presence of a proton gradient across the membrane. The catalytic sites are hosted primarily by the beta subunits. The polypeptide is ATP synthase subunit beta (Caulobacter sp. (strain K31)).